We begin with the raw amino-acid sequence, 757 residues long: Cellulose synthase-like protein B1 (757 aa).

A run of 2 helical transmembrane segments spans residues 18–38 and 50–70; these read TNYF…SLLL and VWLV…LITC. The active site involves Asp136. Positions 186 to 216 form a coiled coil; it reads EFNRDWEKTKREYEKLRRKVEDATGDSHMLD. Asp462 is an active-site residue. Helical transmembrane passes span 533 to 553, 569 to 589, 615 to 635, 674 to 694, 710 to 730, and 737 to 757; these read LAYL…YCLL, LYLG…LWEF, LFSI…VFII, FLPG…FSVG, AEAC…MGLF, and TPLS…VFSV.

The protein belongs to the glycosyltransferase 2 family. Plant cellulose synthase-like B subfamily. In terms of tissue distribution, expressed in young seedlings, primarily in the vascular tissue.

Its subcellular location is the golgi apparatus membrane. Thought to be a Golgi-localized beta-glycan synthase that polymerize the backbones of noncellulosic polysaccharides (hemicelluloses) of plant cell wall. The protein is Cellulose synthase-like protein B1 (CSLB1) of Arabidopsis thaliana (Mouse-ear cress).